The sequence spans 181 residues: uncharacterized protein (181 aa).

This is an uncharacterized protein from Ictalurid herpesvirus 1 (strain Auburn) (IcHV-1).